A 419-amino-acid polypeptide reads, in one-letter code: Satellite RNA 48 kDa protein (419 aa).

A compositionally biased stretch (basic residues) spans 1–27 (MQKTMTRHLSRNRKPHEKVSHVPRRGP). Positions 1-66 (MQKTMTRHLS…SLGRKPYNPG (66 aa)) are disordered.

Belongs to the nepovirus satellite RNA 48 kDa protein family.

The polypeptide is Satellite RNA 48 kDa protein (Allium porrum (Leek)).